A 336-amino-acid chain; its full sequence is Biotin synthase (336 aa).

The region spanning 52 to 279 (KAIQLSTLMS…KSYVRLSAGR (228 aa)) is the Radical SAM core domain. Residues C67, C71, and C74 each coordinate [4Fe-4S] cluster. Residues C111, C142, C202, and R274 each contribute to the [2Fe-2S] cluster site.

This sequence belongs to the radical SAM superfamily. Biotin synthase family. In terms of assembly, homodimer. [4Fe-4S] cluster is required as a cofactor. [2Fe-2S] cluster serves as cofactor.

It carries out the reaction (4R,5S)-dethiobiotin + (sulfur carrier)-SH + 2 reduced [2Fe-2S]-[ferredoxin] + 2 S-adenosyl-L-methionine = (sulfur carrier)-H + biotin + 2 5'-deoxyadenosine + 2 L-methionine + 2 oxidized [2Fe-2S]-[ferredoxin]. It functions in the pathway cofactor biosynthesis; biotin biosynthesis; biotin from 7,8-diaminononanoate: step 2/2. Catalyzes the conversion of dethiobiotin (DTB) to biotin by the insertion of a sulfur atom into dethiobiotin via a radical-based mechanism. The chain is Biotin synthase from Pasteurella multocida (strain Pm70).